A 52-amino-acid chain; its full sequence is uncharacterized protein (52 aa).

This is an uncharacterized protein from Rickettsia conorii (strain ATCC VR-613 / Malish 7).